The sequence spans 349 residues: Phenylalanine--tRNA ligase alpha subunit (349 aa).

Position 258 (E258) interacts with Mg(2+).

Belongs to the class-II aminoacyl-tRNA synthetase family. Phe-tRNA synthetase alpha subunit type 1 subfamily. As to quaternary structure, tetramer of two alpha and two beta subunits. It depends on Mg(2+) as a cofactor.

It localises to the cytoplasm. The enzyme catalyses tRNA(Phe) + L-phenylalanine + ATP = L-phenylalanyl-tRNA(Phe) + AMP + diphosphate + H(+). This Rickettsia conorii (strain ATCC VR-613 / Malish 7) protein is Phenylalanine--tRNA ligase alpha subunit.